A 97-amino-acid polypeptide reads, in one-letter code: HssA/B-like protein 27 (97 aa).

The protein belongs to the hssA/B family.

The chain is HssA/B-like protein 27 (hssl27) from Dictyostelium discoideum (Social amoeba).